The following is a 364-amino-acid chain: Paraneoplastic antigen Ma2 homolog (364 aa).

Ala-2 is modified (N-acetylalanine). Residues 335 to 353 (EEEEASFENESIEEPEEGD) show a composition bias toward acidic residues. Residues 335 to 364 (EEEEASFENESIEEPEEGDGYGRWNHEGDD) are disordered.

It belongs to the PNMA family.

Its subcellular location is the nucleus. The protein localises to the nucleolus. The polypeptide is Paraneoplastic antigen Ma2 homolog (PNMA2) (Pongo abelii (Sumatran orangutan)).